The following is a 390-amino-acid chain: Neutrophil cytosol factor 1 (390 aa).

The PX domain maps to 4-125 (TFIRHIALLG…DFFKVRPDDL (122 aa)). 2 consecutive SH3 domains span residues 156–215 (IILQ…PLDS) and 226–285 (YAGE…KAGE). The interval 291–390 (QRQIRGRGAP…STKRKLTSAV (100 aa)) is disordered. 4 positions are modified to phosphoserine: Ser-304, Ser-321, Ser-329, and Ser-346. A compositionally biased stretch (basic and acidic residues) spans 374–383 (ILHRCTESTK).

In terms of assembly, component of the phagocyte NADPH oxidase complex composed of an obligatory core heterodimer formed by the membrane proteins CYBA and CYBB and the cytosolic regulatory subunits NCF1/p47-phox, NCF2/p67-phox, NCF4/p40-phox and the small GTPase RAC1 or RAC2. Part of a cytosolic complex composed at least by NCF1, NCF2 and NCF4. Interacts (via C-terminus) with NCF2 (via the C-terminal SH3 domain). Interacts with NCF4. Interacts with CYBB. Interacts (via the second SH3 domain) with CYBA; interaction is phosphorylation-dependent. Interacts with NOXA1. Interacts with ADAM15. Interacts with TRAF4. Interacts with FASLG. Interacts with PARK7 (via C-terminus); the interaction is enhanced by LPS and modulates NCF1 phosphorylation and membrane translocation. Phosphorylated by PRKCD; phosphorylation induces activation of NCF1, leading to assembly and activation of the NADPH oxidase complex.

It localises to the cytoplasm. Its subcellular location is the cytosol. The protein resides in the membrane. In terms of biological role, subunit of the phagocyte NADPH oxidase complex that mediates the transfer of electrons from cytosolic NADPH to O2 to produce the superoxide anion (O2(-)). In the activated complex, electrons are first transferred from NADPH to flavin adenine dinucleotide (FAD) and subsequently transferred via two heme molecules to molecular oxygen, producing superoxide through an outer-sphere reaction. Activation of the NADPH oxidase complex is initiated by the assembly of cytosolic subunits of the NADPH oxidase complex with the core NADPH oxidase complex to form a complex at the plasma membrane or phagosomal membrane. This activation process is initiated by phosphorylation dependent binding of the cytosolic NCF1/p47-phox subunit to the C-terminus of CYBA/p22-phox. The sequence is that of Neutrophil cytosol factor 1 from Mus musculus (Mouse).